The following is a 726-amino-acid chain: Replication restart protein PriA (726 aa).

Isoleucine 234 is an ATP binding site. The Helicase ATP-binding domain occupies 234 to 373 (IQSVLYKGVQ…LHRKCFYIKL (140 aa)). A DEAH box motif is present at residues 316–319 (LEEH). Residues cysteine 431, cysteine 434, cysteine 440, cysteine 443, cysteine 458, cysteine 461, cysteine 471, and cysteine 474 each contribute to the Zn(2+) site.

It belongs to the helicase family. PriA subfamily. Component of the replication restart primosome. Requires Zn(2+) as cofactor.

It catalyses the reaction Couples ATP hydrolysis with the unwinding of duplex DNA by translocating in the 3'-5' direction.. The enzyme catalyses ATP + H2O = ADP + phosphate + H(+). Initiates the restart of stalled replication forks, which reloads the replicative helicase on sites other than the origin of replication. Recognizes and binds to abandoned replication forks and remodels them to uncover a helicase loading site. Promotes assembly of the primosome at these replication forks. The protein is Replication restart protein PriA of Buchnera aphidicola subsp. Acyrthosiphon pisum (strain APS) (Acyrthosiphon pisum symbiotic bacterium).